A 595-amino-acid polypeptide reads, in one-letter code: Quinoprotein alcohol dehydrogenase PedH (595 aa).

An N-terminal signal peptide occupies residues 1 to 27 (MTRSPRRPLFAVSLVLSAMLLAGAAHA). Pyrroloquinoline quinone is bound at residue Gln-87. A disulfide bond links Cys-131 and Cys-132. Positions 137, 181, 197, and 198 each coordinate pyrroloquinoline quinone. Glu-199 provides a ligand contact to Pr(3+). Trp-263 contacts pyrroloquinoline quinone. Pr(3+) contacts are provided by Asn-281, Asp-323, and Asp-325. The active-site Proton acceptor is the Asp-323. 4 residues coordinate pyrroloquinoline quinone: Arg-350, Asn-417, Trp-493, and Ala-557.

Belongs to the bacterial PQQ dehydrogenase family. Pr(3+) serves as cofactor. It depends on Nd(3+) as a cofactor. The cofactor is La(3+). Requires Ce(3+) as cofactor. Sm(3+) is required as a cofactor. Pyrroloquinoline quinone serves as cofactor. The disulfide ring formed between the two adjacent cysteine residues Cys-131 and Cys-132 is essential for efficient electron transfer at pH 7 from PedH to its natural electron acceptor cytochrome c550.

The protein localises to the periplasm. It catalyses the reaction a primary alcohol + 2 Fe(III)-[cytochrome c] = an aldehyde + 2 Fe(II)-[cytochrome c] + 2 H(+). The catalysed reaction is ethanol + 2 Fe(III)-[cytochrome c] = acetaldehyde + 2 Fe(II)-[cytochrome c] + 2 H(+). The enzyme catalyses butan-1-ol + 2 Fe(III)-[cytochrome c] = butanal + 2 Fe(II)-[cytochrome c] + 2 H(+). It carries out the reaction butan-2-ol + 2 Fe(III)-[cytochrome c] = butan-2-one + 2 Fe(II)-[cytochrome c] + 2 H(+). It catalyses the reaction 2-phenylethanol + 2 Fe(III)-[cytochrome c] = 2-phenylacetaldehyde + 2 Fe(II)-[cytochrome c] + 2 H(+). The catalysed reaction is octan-1-ol + 2 Fe(III)-[cytochrome c] = octanal + 2 Fe(II)-[cytochrome c] + 2 H(+). The enzyme catalyses hexan-1-ol + 2 Fe(III)-[cytochrome c] = hexanal + 2 Fe(II)-[cytochrome c] + 2 H(+). It carries out the reaction cinnamyl alcohol + 2 Fe(III)-[cytochrome c] = cinnamaldehyde + 2 Fe(II)-[cytochrome c] + 2 H(+). It catalyses the reaction farnesol + 2 Fe(III)-[cytochrome c] = farnesal + 2 Fe(II)-[cytochrome c] + 2 H(+). The catalysed reaction is an aldehyde + 2 Fe(III)-[cytochrome c] + H2O = a carboxylate + 2 Fe(II)-[cytochrome c] + 3 H(+). The enzyme catalyses acetaldehyde + 2 Fe(III)-[cytochrome c] + H2O = 2 Fe(II)-[cytochrome c] + acetate + 3 H(+). It carries out the reaction butanal + 2 Fe(III)-[cytochrome c] + H2O = butanoate + 2 Fe(II)-[cytochrome c] + 3 H(+). It catalyses the reaction hexanal + 2 Fe(III)-[cytochrome c] + H2O = hexanoate + 2 Fe(II)-[cytochrome c] + 3 H(+). The catalysed reaction is octanal + 2 Fe(III)-[cytochrome c] + H2O = octanoate + 2 Fe(II)-[cytochrome c] + 3 H(+). Its function is as follows. Alcohol dehydrogenase that catalyzes the oxidation of a range of substrates, including linear and aromatic primary and secondary alcohols, as well as aldehydes, but only in the presence of lanthanides, allowing bacterial growth with a variety of volatile organic compounds (VOCs) as carbon and energy sources. Is also involved in the transcriptional regulation of pedE and pedH, most likely acting as a lanthanide sensory module. Uses a specific inducible cytochrome c550, encoded by the adjacent gene in the locus, as electron acceptor. The protein is Quinoprotein alcohol dehydrogenase PedH of Pseudomonas putida (strain ATCC 47054 / DSM 6125 / CFBP 8728 / NCIMB 11950 / KT2440).